Reading from the N-terminus, the 556-residue chain is Formate--tetrahydrofolate ligase (556 aa).

65 to 72 (TPAGEGKS) serves as a coordination point for ATP.

The protein belongs to the formate--tetrahydrofolate ligase family.

The enzyme catalyses (6S)-5,6,7,8-tetrahydrofolate + formate + ATP = (6R)-10-formyltetrahydrofolate + ADP + phosphate. It participates in one-carbon metabolism; tetrahydrofolate interconversion. This is Formate--tetrahydrofolate ligase from Streptococcus thermophilus (strain CNRZ 1066).